Here is a 533-residue protein sequence, read N- to C-terminus: Nuclear receptor corepressor 1 (533 aa).

The span at 1–17 (KDKGPPPKSRYEEELRT) shows a compositional bias: basic and acidic residues. The interval 1–21 (KDKGPPPKSRYEEELRTRGKT) is disordered. The CORNR box 1 motif lies at 29 to 33 (IDVII). The segment at 37–144 (IASDKDARER…EGMGQVPRTH (108 aa)) is disordered. The span at 38 to 47 (ASDKDARERG) shows a compositional bias: basic and acidic residues. Residues 48 to 59 (SQSSDSSSSLSS) are compositionally biased toward low complexity. A phosphoserine mark is found at Ser-73 and Ser-77. Residues 130–209 (PSSQAEGMGQ…QSQTVLHPRP (80 aa)) are ID1. Positions 145–148 (RLIT) are required for interaction with RARA in the absence of its ligand. Residues 153–157 (ICQII) carry the CORNR box 2 motif. Over residues 165 to 180 (QVPSQPSTSTFQTSPS) the composition is skewed to low complexity. A disordered region spans residues 165–254 (QVPSQPSTST…SPPQGPAVHE (90 aa)). Residues 181–204 (ALSSTPVRTKPSSRYSPESQSQTV) are compositionally biased toward polar residues. 5 positions are modified to phosphoserine: Ser-196, Ser-214, Ser-230, Ser-245, and Ser-278. A compositionally biased stretch (basic and acidic residues) spans 218-236 (LVDKSRGSRPGKSPERSHI). The tract at residues 306-367 (IFRKLNSSGG…EDIIRKALMG (62 aa)) is ID2. A CORNR box 3 motif is present at residues 357-361 (LEDII). Positions 382 to 399 (HPVGVVPGSASTSVVTSS) are enriched in low complexity. The interval 382-476 (HPVGVVPGSA…RPSSTGSTQF (95 aa)) is disordered. Thr-492 carries the phosphothreonine modification. A phosphoserine mark is found at Ser-529 and Ser-531.

This sequence belongs to the N-CoR nuclear receptor corepressors family. As to quaternary structure, forms a large corepressor complex that contains SIN3A/B and histone deacetylases HDAC1 and HDAC2. This complex associates with the thyroid receptor (TR) and the retinoid acid receptor (RAR) in the absence of ligand. Interacts directly with RARA; the interaction is facilitated with RARA trimethylation. Component of the N-Cor repressor complex, at least composed of CBFA2T3, HEXIM1, NCOR1, NCOR2, HDAC3, TBL1X, TBL1XR1, CORO2A and GPS2. Interacts with ZBTB33; the interaction serves to recruit the N-CoR complex to promoter regions containing methylated CpG dinucleotides. Interacts with TRIM28 and KDM3A. Interacts (via the RD1 domain) with BAZ1A (via its N-terminal); the interaction corepresses a number of NCOR1-regulated genes. Interacts with BCL6, C1D, DACH1, HEXIM1, HDAC7, RORA, RORC, SAP30, SIAH2, SIN3A and SIN3B. May interact with DEAF1. Interacts with RXRA. Interacts with SETD5. Interacts with VDR. Interacts with ZBTB7A. Interacts with AR. Interacts with HDAC3. Post-translationally, ubiquitinated; mediated by SIAH2 and leading to its subsequent proteasomal degradation.

It is found in the nucleus. Its function is as follows. Mediates transcriptional repression by certain nuclear receptors. Part of a complex which promotes histone deacetylation and the formation of repressive chromatin structures which may impede the access of basal transcription factors. Participates in the transcriptional repressor activity produced by BCL6. Recruited by ZBTB7A to the androgen response elements/ARE on target genes, negatively regulates androgen receptor signaling and androgen-induced cell proliferation. Mediates the NR1D1-dependent repression and circadian regulation of TSHB expression. The NCOR1-HDAC3 complex regulates the circadian expression of the core clock gene ARTNL/BMAL1 and the genes involved in lipid metabolism in the liver. This is Nuclear receptor corepressor 1 (Ncor1) from Rattus norvegicus (Rat).